The chain runs to 112 residues: Cytochrome c2 (112 aa).

Heme c-binding residues include Cys14, Cys17, His18, and Met91.

This sequence belongs to the cytochrome c family. In terms of processing, binds 1 heme c group covalently per subunit.

Cytochrome c2 is found mainly in purple, non-sulfur, photosynthetic bacteria where it functions as the electron donor to the oxidized bacteriochlorophyll in the photophosphorylation pathway. However, it may also have a role in the respiratory chain and is found in some non-photosynthetic bacteria. The protein is Cytochrome c2 (cycA) of Rhodospirillum rubrum.